The primary structure comprises 362 residues: MRVLAAMSGGVDSAVAAARAVEAGHEVVGVHLALSAKPGTLRTGARGCCTIEDSHDARRAADILGIPFYVWDFAERFTEEVIETFVGEYAAGRTPNPCLTCNEKIKFEALLEKAMALGFDAVCTGHYARLTVEDGVPVLRRSRDEGKDQSYVLASLTAEQLGHSMFPLGDSLKSQVRQEAAERGLAVAKKPDSHDICFIPDGDTKKFLESKLGQKPGQLVDAETGAVLGEHTGVHGFTVGQRKGLGIDAPAPDGRPRYVLSLEPVSGTVKVGSADHLGVTEIDAKRPIWPSQRELDGPTECVVQVRAHGGTADAVAEVADGGMSIRLRRPLRGVAPGQAVVLYRPEEEGDLVLGSALIAATR.

Residues 6 to 13 (AMSGGVDS) and L32 contribute to the ATP site. The active-site Nucleophile is the C101. C101 and C197 are oxidised to a cystine. Position 125 (G125) interacts with ATP. Positions 147-149 (KDQ) are interaction with tRNA. The active-site Cysteine persulfide intermediate is C197.

It belongs to the MnmA/TRMU family.

Its subcellular location is the cytoplasm. The enzyme catalyses S-sulfanyl-L-cysteinyl-[protein] + uridine(34) in tRNA + AH2 + ATP = 2-thiouridine(34) in tRNA + L-cysteinyl-[protein] + A + AMP + diphosphate + H(+). Catalyzes the 2-thiolation of uridine at the wobble position (U34) of tRNA, leading to the formation of s(2)U34. The sequence is that of tRNA-specific 2-thiouridylase MnmA from Saccharopolyspora erythraea (strain ATCC 11635 / DSM 40517 / JCM 4748 / NBRC 13426 / NCIMB 8594 / NRRL 2338).